A 765-amino-acid polypeptide reads, in one-letter code: Endosialin (765 aa).

An N-terminal signal peptide occupies residues 1–17 (MLLRLLLAWVAAVPALG). Over 18-695 (QVPWTPEPRA…GQSQRDDRWL (678 aa)) the chain is Extracellular. The C-type lectin domain maps to 30–156 (GPSSCYALFP…CTLAVDGYLC (127 aa)). Disulfide bonds link Cys-131-Cys-147, Cys-164-Cys-213, Cys-203-Cys-230, Cys-316-Cys-326, Cys-322-Cys-335, and Cys-337-Cys-350. Residues 162 to 232 (GACPALPLEV…WSQTGPLCPG (71 aa)) form the Sushi domain. The 40-residue stretch at 312–351 (DTDECQIAGVCQQMCVNYVGGFECYCSEGHELEADGISCS) folds into the EGF-like; calcium-binding domain. O-linked (GalNAc...) threonine glycosylation is found at Thr-401, Thr-428, Thr-448, Thr-456, Thr-459, and Thr-466. O-linked (GalNAc...) serine glycans are attached at residues Ser-467 and Ser-470. Residue Thr-472 is glycosylated (O-linked (GalNAc...) threonine). Ser-477 is a glycosylation site (O-linked (GalNAc...) serine). 11 O-linked (GalNAc...) threonine glycosylation sites follow: Thr-488, Thr-517, Thr-520, Thr-535, Thr-552, Thr-554, Thr-556, Thr-570, Thr-571, Thr-604, and Thr-613. Residues 548-675 (MSPDTHTITY…QLPSVPSTAA (128 aa)) form a disordered region. Over residues 622-633 (PAFPSSPLPPQR) the composition is skewed to pro residues. O-linked (GalNAc...) serine glycosylation is found at Ser-626 and Ser-627. O-linked (GalNAc...) threonine glycosylation is found at Thr-635 and Thr-638. Residues 635–647 (TNQTSSISPTHSY) show a composition bias toward polar residues. O-linked (GalNAc...) serine glycosylation is found at Ser-639 and Ser-640. Thr-644 carries an O-linked (GalNAc...) threonine glycan. O-linked (GalNAc...) serine glycosylation is present at Ser-663. The O-linked (GalNAc...) threonine glycan is linked to Thr-673. Residues 696-716 (LVALLVPTCVFLVVLLALGIV) traverse the membrane as a helical segment. The Cytoplasmic portion of the chain corresponds to 717-765 (YCTRCGSHAPNKRITDCYRWVTHAGNKSSTEPMPPRGSLTGVQTCRTSV). Ser-754 is modified (phosphoserine).

As to quaternary structure, interacts with PDGFRA; this interaction promotes PDGF receptor signaling pathway. Interacts with integrin beta-1/ITGB1. Interacts with insulin receptor/INSR; this interaction diminishes INSR autophosphorylation. O-glycosylated by sialylated oligosaccharides. Post-translationally, may be N-glycosylated. Expressed in cell lines derived from endothelial cells, embryonic fibroblasts and preadipocytes. Expressed in skeletal muscle by a subset of pericytes.

It is found in the membrane. Cell surface glycoprotein involved in various biological processes including angiogenesis, immune response modulation, and tissue remodeling and repair. Participates in pericyte proliferation through positive modulation of the PDGF receptor signaling pathway. Acts as a scaffold for factor X, triggering allosteric changes and the spatial re-alignment of factor X with the TF-factor VIIa complex, thereby enhancing coagulation activation. Modulates the insulin signaling pathway by interacting with insulin receptor/INSR and by diminishing its capacity to be autophosphorylated in response to insulin. Also regulates LPS-induced inflammatory responses in macrophages by favoring production of proinflammatory cytokines. This Mus musculus (Mouse) protein is Endosialin (Cd248).